An 874-amino-acid polypeptide reads, in one-letter code: Alanine--tRNA ligase (874 aa).

The Zn(2+) site is built by His-564, His-568, Cys-665, and His-669.

Belongs to the class-II aminoacyl-tRNA synthetase family. Zn(2+) is required as a cofactor.

It is found in the cytoplasm. The catalysed reaction is tRNA(Ala) + L-alanine + ATP = L-alanyl-tRNA(Ala) + AMP + diphosphate. Its function is as follows. Catalyzes the attachment of alanine to tRNA(Ala) in a two-step reaction: alanine is first activated by ATP to form Ala-AMP and then transferred to the acceptor end of tRNA(Ala). Also edits incorrectly charged Ser-tRNA(Ala) and Gly-tRNA(Ala) via its editing domain. In Paraburkholderia phytofirmans (strain DSM 17436 / LMG 22146 / PsJN) (Burkholderia phytofirmans), this protein is Alanine--tRNA ligase.